The sequence spans 319 residues: ATP-dependent 6-phosphofructokinase (319 aa).

Gly-11 is an ATP binding site. Position 21–25 (21–25 (RAVVR)) interacts with ADP. Residues 72–73 (RC) and 102–105 (GDGS) contribute to the ATP site. Asp-103 is a Mg(2+) binding site. 125-127 (TID) lines the substrate pocket. Asp-127 functions as the Proton acceptor in the catalytic mechanism. Arg-154 provides a ligand contact to ADP. Substrate-binding positions include Arg-162 and 169–171 (MGR). ADP-binding positions include 185–187 (GAE), Arg-211, and 213–215 (KLH). Substrate contacts are provided by residues Glu-222, Arg-243, and 249–252 (HIQR).

Belongs to the phosphofructokinase type A (PFKA) family. ATP-dependent PFK group I subfamily. Prokaryotic clade 'B1' sub-subfamily. Homotetramer. The cofactor is Mg(2+).

The protein resides in the cytoplasm. It carries out the reaction beta-D-fructose 6-phosphate + ATP = beta-D-fructose 1,6-bisphosphate + ADP + H(+). The protein operates within carbohydrate degradation; glycolysis; D-glyceraldehyde 3-phosphate and glycerone phosphate from D-glucose: step 3/4. Allosterically activated by ADP and other diphosphonucleosides, and allosterically inhibited by phosphoenolpyruvate. In terms of biological role, catalyzes the phosphorylation of D-fructose 6-phosphate to fructose 1,6-bisphosphate by ATP, the first committing step of glycolysis. In Alkaliphilus metalliredigens (strain QYMF), this protein is ATP-dependent 6-phosphofructokinase.